Here is a 378-residue protein sequence, read N- to C-terminus: Apolipoprotein A-IV (378 aa).

A signal peptide spans 1–20 (MFLKAVVLTLSLVAITGARA). Repeat copies occupy residues 33 to 54 (DYFS…QSEL), 60 to 81 (SVTK…RNSW), 82 to 98 (EHSR…RQVG), 110 to 130 (PNCD…QAVG), 131 to 152 (PYAE…NQLT), 153 to 174 (SHAQ…SSLT), 175 to 196 (PFAD…GHLT), 197 to 218 (PYTD…RSLA), 219 to 240 (PYAQ…FQMK), 241 to 262 (KNAE…QRLA), 263 to 280 (PVAE…AGLH), 281 to 302 (KSLA…RNVG), and 303 to 324 (PYGE…QKLG). Positions 33 to 324 (DYFSQLSNNA…QVEELRQKLG (292 aa)) are 13 X 22 AA approximate tandem repeats. Residues 354–378 (EKESQDTPVALPKQEQEQSAVPLES) are disordered.

It belongs to the apolipoprotein A1/A4/E family. In terms of assembly, homodimer.

It is found in the secreted. May have a role in chylomicrons and VLDL secretion and catabolism. Required for efficient activation of lipoprotein lipase by ApoC-II; potent activator of LCAT. Apoa-IV is a major component of HDL and chylomicrons. The polypeptide is Apolipoprotein A-IV (Canis lupus familiaris (Dog)).